We begin with the raw amino-acid sequence, 153 residues long: Large ribosomal subunit protein uL15 (153 aa).

It belongs to the universal ribosomal protein uL15 family. As to quaternary structure, part of the 50S ribosomal subunit.

Its function is as follows. Binds to the 23S rRNA. The chain is Large ribosomal subunit protein uL15 from Pelagibacter ubique (strain HTCC1062).